Consider the following 380-residue polypeptide: MHSKHPTDTARRCETGTDSSDTAADDYSLAGYRFELPEEQIAQHPPEHRGASRLFVMDRKSGVNTQASFKDIGSFLPEGALLVANNSRVLPARMLGRRPTGGKVEFLLLTPLPLVQPQTGTDGRSCAEAEGLLRASKRVRPGDVMHFDGLDVEVLHTADFGRCAVRMHWKGDLAGLFLRQGHLPLPPYIRRPDGEDDHSRYQTVYSRQDRLGSVAAPTAGLHFTPELTASLQEQGFGWAEVTLYVGYGTFSPVRAEDIRTHTMHREYMEITEQAAQAINDAKRQGRPVVTVGTTSTRVLEGAWAACGEIRPFTGWTDIFIYPGYRFNVADHIITNFHLPESSLLMMISAFAGREKTLQAYSQAVAAGYRFFSYGDAMLIL.

A compositionally biased stretch (basic and acidic residues) spans 1–15 (MHSKHPTDTARRCET). Residues 1-24 (MHSKHPTDTARRCETGTDSSDTAA) are disordered.

Belongs to the QueA family. Monomer.

Its subcellular location is the cytoplasm. The enzyme catalyses 7-aminomethyl-7-carbaguanosine(34) in tRNA + S-adenosyl-L-methionine = epoxyqueuosine(34) in tRNA + adenine + L-methionine + 2 H(+). It functions in the pathway tRNA modification; tRNA-queuosine biosynthesis. Transfers and isomerizes the ribose moiety from AdoMet to the 7-aminomethyl group of 7-deazaguanine (preQ1-tRNA) to give epoxyqueuosine (oQ-tRNA). The sequence is that of S-adenosylmethionine:tRNA ribosyltransferase-isomerase from Oleidesulfovibrio alaskensis (strain ATCC BAA-1058 / DSM 17464 / G20) (Desulfovibrio alaskensis).